Reading from the N-terminus, the 471-residue chain is 3-isopropylmalate dehydratase large subunit (471 aa).

The [4Fe-4S] cluster site is built by Cys-347, Cys-407, and Cys-410.

It belongs to the aconitase/IPM isomerase family. LeuC type 1 subfamily. Heterodimer of LeuC and LeuD. Requires [4Fe-4S] cluster as cofactor.

The catalysed reaction is (2R,3S)-3-isopropylmalate = (2S)-2-isopropylmalate. It participates in amino-acid biosynthesis; L-leucine biosynthesis; L-leucine from 3-methyl-2-oxobutanoate: step 2/4. In terms of biological role, catalyzes the isomerization between 2-isopropylmalate and 3-isopropylmalate, via the formation of 2-isopropylmaleate. This Granulibacter bethesdensis (strain ATCC BAA-1260 / CGDNIH1) protein is 3-isopropylmalate dehydratase large subunit.